Consider the following 176-residue polypeptide: Ribosome maturation factor RimM (176 aa).

The PRC barrel domain maps to 99-176; sequence EDEYYWSDLV…RMVVDWERDF (78 aa).

The protein belongs to the RimM family. In terms of assembly, binds ribosomal protein uS19.

It localises to the cytoplasm. An accessory protein needed during the final step in the assembly of 30S ribosomal subunit, possibly for assembly of the head region. Essential for efficient processing of 16S rRNA. May be needed both before and after RbfA during the maturation of 16S rRNA. It has affinity for free ribosomal 30S subunits but not for 70S ribosomes. The polypeptide is Ribosome maturation factor RimM (Psychrobacter sp. (strain PRwf-1)).